The following is a 275-amino-acid chain: 3-methyl-2-oxobutanoate hydroxymethyltransferase (275 aa).

Residues D44 and D83 each contribute to the Mg(2+) site. 3-methyl-2-oxobutanoate contacts are provided by residues 44-45 (DS), D83, and K113. E115 contacts Mg(2+). The Proton acceptor role is filled by E182.

The protein belongs to the PanB family. As to quaternary structure, homodecamer; pentamer of dimers. Mg(2+) is required as a cofactor.

Its subcellular location is the cytoplasm. The catalysed reaction is 3-methyl-2-oxobutanoate + (6R)-5,10-methylene-5,6,7,8-tetrahydrofolate + H2O = 2-dehydropantoate + (6S)-5,6,7,8-tetrahydrofolate. Its pathway is cofactor biosynthesis; (R)-pantothenate biosynthesis; (R)-pantoate from 3-methyl-2-oxobutanoate: step 1/2. In terms of biological role, catalyzes the reversible reaction in which hydroxymethyl group from 5,10-methylenetetrahydrofolate is transferred onto alpha-ketoisovalerate to form ketopantoate. The chain is 3-methyl-2-oxobutanoate hydroxymethyltransferase from Clostridium botulinum (strain Alaska E43 / Type E3).